Here is a 211-residue protein sequence, read N- to C-terminus: Outer-membrane lipoprotein carrier protein (211 aa).

The signal sequence occupies residues 1 to 24; that stretch reads MNTIKILIGLLGIFLFSLSGIVSA.

Belongs to the LolA family. Monomer.

The protein resides in the periplasm. In terms of biological role, participates in the translocation of lipoproteins from the inner membrane to the outer membrane. Only forms a complex with a lipoprotein if the residue after the N-terminal Cys is not an aspartate (The Asp acts as a targeting signal to indicate that the lipoprotein should stay in the inner membrane). The chain is Outer-membrane lipoprotein carrier protein from Coxiella burnetii (strain RSA 331 / Henzerling II).